The primary structure comprises 347 residues: Heat-inducible transcription repressor HrcA (347 aa).

Belongs to the HrcA family.

Its function is as follows. Negative regulator of class I heat shock genes (grpE-dnaK-dnaJ and groELS operons). Prevents heat-shock induction of these operons. This is Heat-inducible transcription repressor HrcA from Lactococcus lactis subsp. cremoris (strain MG1363).